Reading from the N-terminus, the 152-residue chain is Dynein light chain Tctex-type protein 2B (152 aa).

It belongs to the dynein light chain Tctex-type family. As to quaternary structure, light chain of the cytoplasmic dynein complex 2, a multisubunit complex composed at least of eleven different proteins. The cytoplasmic dynein 2 complex consists of two catalytic heavy chains (HCs) and a number of non-catalytic subunits presented by intermediate chains (ICs), light intermediate chains (LICs) and light chains (LCs). Among them, a heavy chain (DYNC2H1), two intermediate chains (DYNC2I2 and DYNC2I1), a light intermediate chain (DYNC2LI1), and a light chain (DYNLT2B) are unique to the dynein-2 complex, but a subset of the light chains are also shared by dynein-1 and dynein-2 complexes. The dimer DYNLT2B-DYNLT1/DYNLT3 interacts with DYNC2I1; this interaction is crucial for retrograde trafficking of ciliary proteins.

Its subcellular location is the dynein axonemal particle. In terms of biological role, acts as one of several non-catalytic accessory components of the cytoplasmic dynein 2 complex (dynein-2 complex), a motor protein complex that drives the movement of cargos along microtubules within cilia and flagella in concert with the intraflagellar transport (IFT) system. Required for proper retrograde ciliary transport. This chain is Dynein light chain Tctex-type protein 2B (DYNLT2B), found in Bos taurus (Bovine).